Reading from the N-terminus, the 282-residue chain is Elongation factor Ts (282 aa).

Residues 80 to 83 form an involved in Mg(2+) ion dislocation from EF-Tu region; it reads TDFV.

Belongs to the EF-Ts family.

The protein localises to the cytoplasm. Associates with the EF-Tu.GDP complex and induces the exchange of GDP to GTP. It remains bound to the aminoacyl-tRNA.EF-Tu.GTP complex up to the GTP hydrolysis stage on the ribosome. The sequence is that of Elongation factor Ts from Aliivibrio salmonicida (strain LFI1238) (Vibrio salmonicida (strain LFI1238)).